A 441-amino-acid polypeptide reads, in one-letter code: UBX domain-containing protein 6 (441 aa).

A mediates interaction with LMAN1 region spans residues 1–10; that stretch reads MKKFFQEFKA. Lys-2 is modified (N-acetylalanine). Disordered stretches follow at residues 13 to 79 and 87 to 106; these read KFKS…QDTI and LQAEATVSGSPEAPGTNVVS. The segment covering 22-36 has biased composition (basic and acidic residues); sequence KLKESVGEKAHKEKP. Residues 51–63 form a VCP/p97-interacting motif (VIM) region; sequence EAQMAAAAALARL. Over residues 52 to 61 the composition is skewed to low complexity; it reads AQMAAAAALA. Ser-96 is subject to Phosphoserine. The PUB domain maps to 175 to 244; that stretch reads VDTIAKYLDN…DPEEFYVLSE (70 aa). The 77-residue stretch at 332 to 408 folds into the UBX domain; the sequence is RKYNYTLLRV…GLVPSALLTF (77 aa).

In terms of assembly, interacts with VCP through the PUB domain (via C-terminus) and VIM motif (via N-terminus); the interaction is direct. Forms a ternary complex with CAV1 and VCP. Interacts with SYVN1. Interacts with HERPUD1. Interacts with VCPKMT. May interact with DERL1. Interacts with PLAA, VCP and YOD1; may form a complex involved in macroautophagy. Interacts with LMAN1. As to expression, enhanced expression in testis.

The protein localises to the cytoplasm. It localises to the cytosol. The protein resides in the membrane. Its subcellular location is the nucleus. It is found in the cytoskeleton. The protein localises to the microtubule organizing center. It localises to the centrosome. The protein resides in the early endosome membrane. Its subcellular location is the late endosome membrane. It is found in the lysosome membrane. In terms of biological role, may negatively regulate the ATPase activity of VCP, an ATP-driven segregase that associates with different cofactors to control a wide variety of cellular processes. As a cofactor of VCP, it may play a role in the transport of CAV1 to lysosomes for degradation. It may also play a role in endoplasmic reticulum-associated degradation (ERAD) of misfolded proteins. Together with VCP and other cofactors, it may play a role in macroautophagy, regulating for instance the clearance of damaged lysosomes. The sequence is that of UBX domain-containing protein 6 from Homo sapiens (Human).